The chain runs to 521 residues: Ribonuclease Y (521 aa).

The helical transmembrane segment at Met-1 to Ile-21 threads the bilayer. One can recognise a KH domain in the interval Thr-211–Leu-271. The region spanning Val-337–Ala-430 is the HD domain.

It belongs to the RNase Y family.

Its subcellular location is the cell membrane. In terms of biological role, endoribonuclease that initiates mRNA decay. The sequence is that of Ribonuclease Y from Desulfotalea psychrophila (strain LSv54 / DSM 12343).